Reading from the N-terminus, the 137-residue chain is Protein LTO1 homolog (137 aa).

Ala2 carries the N-acetylalanine modification. The residue at position 4 (Ser4) is a Phosphoserine. A deca-GX3 motif; required for interaction with YAE1 and the CIA complex region spans residues 22–58; that stretch reads GYREGYEEGSSLGVMEGRQHGTLHGAKIGSEIGCYQG.

Belongs to the LTO1 family. Forms a complex with YAE1. Interacts with PYCR1 and PYCR2. In terms of tissue distribution, widely expressed. Highly expressed in placenta, kidney and skeletal muscle.

The protein localises to the nucleus. The complex LTO1:YAE1 functions as a target specific adapter that probably recruits apo-ABCE1 to the cytosolic iron-sulfur protein assembly (CIA) complex machinery. May be required for biogenesis of the large ribosomal subunit and initiation of translation. May play a role in the regulation of proline metabolism and ROS production. The chain is Protein LTO1 homolog from Homo sapiens (Human).